The chain runs to 117 residues: Holo-[acyl-carrier-protein] synthase (117 aa).

2 residues coordinate Mg(2+): D8 and E59.

Belongs to the P-Pant transferase superfamily. AcpS family. Mg(2+) is required as a cofactor.

The protein resides in the cytoplasm. It carries out the reaction apo-[ACP] + CoA = holo-[ACP] + adenosine 3',5'-bisphosphate + H(+). Functionally, transfers the 4'-phosphopantetheine moiety from coenzyme A to a Ser of acyl-carrier-protein. In Staphylococcus carnosus (strain TM300), this protein is Holo-[acyl-carrier-protein] synthase.